A 337-amino-acid chain; its full sequence is Inositol 2-dehydrogenase (337 aa).

It belongs to the Gfo/Idh/MocA family. As to quaternary structure, homotetramer.

It carries out the reaction myo-inositol + NAD(+) = scyllo-inosose + NADH + H(+). Functionally, involved in the oxidation of myo-inositol (MI) to 2-keto-myo-inositol (2KMI or 2-inosose). This chain is Inositol 2-dehydrogenase, found in Burkholderia ambifaria (strain MC40-6).